A 658-amino-acid chain; its full sequence is DNA mismatch repair protein MutL (658 aa).

Residues 114–130 (RQEDSSHATQVKAEDGK) show a composition bias toward basic and acidic residues. Disordered stretches follow at residues 114 to 137 (RQEDSSHATQVKAEDGKLSSPTAA) and 369 to 391 (DYPTGNKPDTRNAFGSSGKTAPM).

Belongs to the DNA mismatch repair MutL/HexB family.

Its function is as follows. This protein is involved in the repair of mismatches in DNA. It is required for dam-dependent methyl-directed DNA mismatch repair. May act as a 'molecular matchmaker', a protein that promotes the formation of a stable complex between two or more DNA-binding proteins in an ATP-dependent manner without itself being part of a final effector complex. The protein is DNA mismatch repair protein MutL of Neisseria meningitidis serogroup C (strain 053442).